We begin with the raw amino-acid sequence, 151 residues long: Regulatory protein RecX (151 aa).

It belongs to the RecX family.

It is found in the cytoplasm. Modulates RecA activity. This is Regulatory protein RecX from Actinobacillus pleuropneumoniae serotype 5b (strain L20).